Consider the following 238-residue polypeptide: Xyloglucan-specific endo-beta-1,4-glucanase A (238 aa).

The signal sequence occupies residues 1-14 (MKLSLLSLATLASA).

The protein belongs to the glycosyl hydrolase 12 (cellulase H) family.

It is found in the secreted. The enzyme catalyses xyloglucan + H2O = xyloglucan oligosaccharides.. Catalyzes endohydrolysis of 1,4-beta-D-glucosidic linkages in xyloglucan with retention of the beta-configuration of the glycosyl residues. Specific for xyloglucan and does not hydrolyze other cell wall components. The protein is Xyloglucan-specific endo-beta-1,4-glucanase A (xgeA) of Aspergillus aculeatus.